We begin with the raw amino-acid sequence, 130 residues long: Small ribosomal subunit protein uS8 (130 aa).

Belongs to the universal ribosomal protein uS8 family. As to quaternary structure, part of the 30S ribosomal subunit. Contacts proteins S5 and S12.

Functionally, one of the primary rRNA binding proteins, it binds directly to 16S rRNA central domain where it helps coordinate assembly of the platform of the 30S subunit. This Alteromonas mediterranea (strain DSM 17117 / CIP 110805 / LMG 28347 / Deep ecotype) protein is Small ribosomal subunit protein uS8.